Here is a 282-residue protein sequence, read N- to C-terminus: Pantothenate synthetase (282 aa).

30-37 contributes to the ATP binding site; sequence MGYLHEGH. His-37 (proton donor) is an active-site residue. Residue Gln-61 coordinates (R)-pantoate. Gln-61 serves as a coordination point for beta-alanine. 147 to 150 contacts ATP; that stretch reads GMKD. Gln-153 is a binding site for (R)-pantoate. ATP contacts are provided by residues Val-176 and 184 to 187; that span reads KSSR.

It belongs to the pantothenate synthetase family. As to quaternary structure, homodimer.

The protein localises to the cytoplasm. The catalysed reaction is (R)-pantoate + beta-alanine + ATP = (R)-pantothenate + AMP + diphosphate + H(+). It participates in cofactor biosynthesis; (R)-pantothenate biosynthesis; (R)-pantothenate from (R)-pantoate and beta-alanine: step 1/1. Functionally, catalyzes the condensation of pantoate with beta-alanine in an ATP-dependent reaction via a pantoyl-adenylate intermediate. The chain is Pantothenate synthetase from Bacillus cereus (strain ATCC 10987 / NRS 248).